The following is a 406-amino-acid chain: NADH-ubiquinone oxidoreductase 49 kDa subunit (406 aa).

The protein belongs to the complex I 49 kDa subunit family. Complex I is composed of 45 different subunits. Component of the iron-sulfur (IP) fragment of the enzyme.

The protein localises to the mitochondrion inner membrane. The catalysed reaction is a ubiquinone + NADH + 5 H(+)(in) = a ubiquinol + NAD(+) + 4 H(+)(out). Its function is as follows. Core subunit of the mitochondrial membrane respiratory chain NADH dehydrogenase (Complex I) that is believed to belong to the minimal assembly required for catalysis. Complex I functions in the transfer of electrons from NADH to the respiratory chain. The immediate electron acceptor for the enzyme is believed to be ubiquinone. This is NADH-ubiquinone oxidoreductase 49 kDa subunit (nad7) from Dictyostelium citrinum (Slime mold).